The following is a 213-amino-acid chain: LexA repressor (213 aa).

Residues 31 to 51 (RAEISRELGFRSPNAAEEYLK) constitute a DNA-binding region (H-T-H motif). Active-site for autocatalytic cleavage activity residues include Ser-129 and Lys-166.

The protein belongs to the peptidase S24 family. As to quaternary structure, homodimer.

The enzyme catalyses Hydrolysis of Ala-|-Gly bond in repressor LexA.. Its function is as follows. Represses a number of genes involved in the response to DNA damage (SOS response), including recA and lexA. In the presence of single-stranded DNA, RecA interacts with LexA causing an autocatalytic cleavage which disrupts the DNA-binding part of LexA, leading to derepression of the SOS regulon and eventually DNA repair. This is LexA repressor from Mannheimia succiniciproducens (strain KCTC 0769BP / MBEL55E).